A 509-amino-acid chain; its full sequence is DNA primase DnaG (509 aa).

The Toprim domain occupies 167-253 (DAIVVVEGRA…CVEDLARHEV (87 aa)). Residues Glu-173, Asp-215, and Asp-217 each contribute to the Mg(2+) site. The segment at 267–411 (KQAASDDADP…ASTDEQPKTL (145 aa)) is disordered. Composition is skewed to low complexity over residues 313–331 (PVSS…ETAA) and 383–402 (ESTA…AAGA).

Belongs to the archaeal DnaG primase family. Forms a ternary complex with MCM helicase and DNA. Mg(2+) serves as cofactor.

The enzyme catalyses ssDNA + n NTP = ssDNA/pppN(pN)n-1 hybrid + (n-1) diphosphate.. In terms of biological role, RNA polymerase that catalyzes the synthesis of short RNA molecules used as primers for DNA polymerase during DNA replication. In Natronomonas pharaonis (strain ATCC 35678 / DSM 2160 / CIP 103997 / JCM 8858 / NBRC 14720 / NCIMB 2260 / Gabara) (Halobacterium pharaonis), this protein is DNA primase DnaG.